Reading from the N-terminus, the 148-residue chain is 3-hydroxyacyl-[acyl-carrier-protein] dehydratase FabZ (148 aa).

Residue H55 is part of the active site.

It belongs to the thioester dehydratase family. FabZ subfamily.

Its subcellular location is the cytoplasm. It catalyses the reaction a (3R)-hydroxyacyl-[ACP] = a (2E)-enoyl-[ACP] + H2O. Its function is as follows. Involved in unsaturated fatty acids biosynthesis. Catalyzes the dehydration of short chain beta-hydroxyacyl-ACPs and long chain saturated and unsaturated beta-hydroxyacyl-ACPs. This Haemophilus influenzae (strain 86-028NP) protein is 3-hydroxyacyl-[acyl-carrier-protein] dehydratase FabZ.